The following is a 148-amino-acid chain: Ergosterol biosynthetic protein 28 (148 aa).

At 1-25 (MFSLQDVITTTKTTLAAMPKGYLPK) the chain is on the cytoplasmic side. Residues 26–46 (WLLFISIVSVFNSIQTYVSGL) form a helical membrane-spanning segment. Topologically, residues 47–92 (ELTRKVYERKPTETTHLSARTFGTWTFISCVIRFYGAMYLNEPHIF) are lumenal. A helical membrane pass occupies residues 93–113 (ELVFMSYMVALFHFGSELLIF). Over 114–120 (RTCKLGK) the chain is Cytoplasmic. Residues 121–136 (GFMGPLVVSTTSLVWM) traverse the membrane as a helical segment. The Lumenal segment spans residues 137–148 (YKQREYYTGVAW).

The protein belongs to the ERG28 family. As to quaternary structure, heterotetramer of ERG25, ERG26, ERG27 and ERG28. ERG28 acts as a scaffold to tether ERG27 and other 4,4-demethylation-related enzymes, forming a demethylation enzyme complex, in the endoplasmic reticulum. Interacts with ERG25, ERG26 and ERG27. Also interacts with ERG1, ERG3, ERG5, ERG6 and ERG11.

It is found in the endoplasmic reticulum membrane. In terms of biological role, part of the third module of ergosterol biosynthesis pathway that includes the late steps of the pathway. ERG28 has a role as a scaffold to help anchor the catalytic components of the C-4 demethylation complex ERG25, ERG26 and ERG27 to the endoplasmic reticulum. The third module or late pathway involves the ergosterol synthesis itself through consecutive reactions that mainly occur in the endoplasmic reticulum (ER) membrane. Firstly, the squalene synthase ERG9 catalyzes the condensation of 2 farnesyl pyrophosphate moieties to form squalene, which is the precursor of all steroids. Squalene synthase is crucial for balancing the incorporation of farnesyl diphosphate (FPP) into sterol and nonsterol isoprene synthesis. Secondly, the squalene epoxidase ERG1 catalyzes the stereospecific oxidation of squalene to (S)-2,3-epoxysqualene, which is considered to be a rate-limiting enzyme in steroid biosynthesis. Then, the lanosterol synthase ERG7 catalyzes the cyclization of (S)-2,3 oxidosqualene to lanosterol, a reaction that forms the sterol core. In the next steps, lanosterol is transformed to zymosterol through a complex process involving various demethylation, reduction and desaturation reactions. The lanosterol 14-alpha-demethylase ERG11 (also known as CYP51) catalyzes C14-demethylation of lanosterol to produce 4,4'-dimethyl cholesta-8,14,24-triene-3-beta-ol, which is critical for ergosterol biosynthesis. The C-14 reductase ERG24 reduces the C14=C15 double bond of 4,4-dimethyl-cholesta-8,14,24-trienol to produce 4,4-dimethyl-cholesta-8,24-dienol. 4,4-dimethyl-cholesta-8,24-dienol is substrate of the C-4 demethylation complex ERG25-ERG26-ERG27 in which ERG25 catalyzes the three-step monooxygenation required for the demethylation of 4,4-dimethyl and 4alpha-methylsterols, ERG26 catalyzes the oxidative decarboxylation that results in a reduction of the 3-beta-hydroxy group at the C-3 carbon to an oxo group, and ERG27 is responsible for the reduction of the keto group on the C-3. ERG28 has a role as a scaffold to help anchor ERG25, ERG26 and ERG27 to the endoplasmic reticulum and ERG29 regulates the activity of the iron-containing C4-methylsterol oxidase ERG25. Then, the sterol 24-C-methyltransferase ERG6 catalyzes the methyl transfer from S-adenosyl-methionine to the C-24 of zymosterol to form fecosterol. The C-8 sterol isomerase ERG2 catalyzes the reaction which results in unsaturation at C-7 in the B ring of sterols and thus converts fecosterol to episterol. The sterol-C5-desaturase ERG3 then catalyzes the introduction of a C-5 double bond in the B ring to produce 5-dehydroepisterol. The C-22 sterol desaturase ERG5 further converts 5-dehydroepisterol into ergosta-5,7,22,24(28)-tetraen-3beta-ol by forming the C-22(23) double bond in the sterol side chain. Finally, ergosta-5,7,22,24(28)-tetraen-3beta-ol is substrate of the C-24(28) sterol reductase ERG4 to produce ergosterol. The chain is Ergosterol biosynthetic protein 28 from Saccharomyces cerevisiae (strain ATCC 204508 / S288c) (Baker's yeast).